Here is a 155-residue protein sequence, read N- to C-terminus: Protein SprT-like (155 aa).

The region spanning 7-145 is the SprT-like domain; the sequence is QQHMEEVSLQ…GSCGGRLKQT (139 aa). His67 provides a ligand contact to Zn(2+). The active site involves Glu68. His71 is a Zn(2+) binding site.

This sequence belongs to the SprT family. Requires Zn(2+) as cofactor.

Its subcellular location is the cytoplasm. This is Protein SprT-like from Listeria innocua serovar 6a (strain ATCC BAA-680 / CLIP 11262).